The following is a 447-amino-acid chain: MRINKPFSDDSNTVVFVSSKTYGVKEEAAHNPNVEFGVVLPTDFPAFNRALVQFLKRKKTKLNINLDSLIELYKKNENSGCFHTAIKTVITSVTFCETTPFTMKTKPEKNVEVAVQCAVEYHNLVKEYETVGEYVNLARELQDTPSDLLYSEVFVKHFEKAASKLPVKIKVLKQSDLIKKKMGLLLGVNQGSEREARLLVISYQANKNSKEKLAFVGKGITYDSGGMNIKTGDYMRGMKYDMSGAAIVCSTVLALAKNKVKTNVVAVAALTENLPGAKAQRPDDIKIAYNGKSVEIDNTDAEGRLVLADAITYAAKDLAATHIIDVATLTGLMSYILSTTYTGIFSTCDHQWESFKKAACSAGEPVWRLPMHPDYLKPLQLTKLADLQNSTSARGAGSSRAACFLAEFREGVSLIHCDIASTASIENLGQGVLVRTLYERASQLANK.

Mn(2+) contacts are provided by Lys218 and Asp223. Lys230 is a catalytic residue. The Mn(2+) site is built by Asp241, Asp300, and Glu302. Arg304 is a catalytic residue.

Belongs to the peptidase M17 family. It depends on Mn(2+) as a cofactor.

Its subcellular location is the cytoplasm. The enzyme catalyses Release of an N-terminal amino acid, Xaa-|-Yaa-, in which Xaa is preferably Leu, but may be other amino acids including Pro although not Arg or Lys, and Yaa may be Pro. Amino acid amides and methyl esters are also readily hydrolyzed, but rates on arylamides are exceedingly low.. It carries out the reaction Release of an N-terminal amino acid, preferentially leucine, but not glutamic or aspartic acids.. Its function is as follows. Presumably involved in the processing and regular turnover of intracellular proteins. Catalyzes the removal of unsubstituted N-terminal amino acids from various peptides. This is Probable cytosol aminopeptidase (pepA) from Mycoplasma genitalium (strain ATCC 33530 / DSM 19775 / NCTC 10195 / G37) (Mycoplasmoides genitalium).